Here is a 458-residue protein sequence, read N- to C-terminus: Putative long chain fatty acid-CoA ligase VraA (458 aa).

Belongs to the ATP-dependent AMP-binding enzyme family.

In Staphylococcus aureus (strain Mu3 / ATCC 700698), this protein is Putative long chain fatty acid-CoA ligase VraA (vraA).